Here is a 652-residue protein sequence, read N- to C-terminus: Acetyl-coenzyme A synthetase (652 aa).

Residues 189 to 192 (RGGK) and S311 each bind CoA. ATP-binding positions include 387–389 (GEP), 411–416 (DTWWQT), D500, and R515. S523 lines the CoA pocket. R526 contributes to the ATP binding site. V537, H539, and I542 together coordinate Mg(2+). K584 lines the CoA pocket. K609 carries the N6-acetyllysine modification.

The protein belongs to the ATP-dependent AMP-binding enzyme family. Mg(2+) is required as a cofactor. Post-translationally, acetylated. Deacetylation by the SIR2-homolog deacetylase activates the enzyme.

It carries out the reaction acetate + ATP + CoA = acetyl-CoA + AMP + diphosphate. In terms of biological role, catalyzes the conversion of acetate into acetyl-CoA (AcCoA), an essential intermediate at the junction of anabolic and catabolic pathways. AcsA undergoes a two-step reaction. In the first half reaction, AcsA combines acetate with ATP to form acetyl-adenylate (AcAMP) intermediate. In the second half reaction, it can then transfer the acetyl group from AcAMP to the sulfhydryl group of CoA, forming the product AcCoA. The polypeptide is Acetyl-coenzyme A synthetase (Bartonella quintana (strain Toulouse) (Rochalimaea quintana)).